We begin with the raw amino-acid sequence, 159 residues long: SsrA-binding protein (159 aa).

It belongs to the SmpB family.

It is found in the cytoplasm. In terms of biological role, required for rescue of stalled ribosomes mediated by trans-translation. Binds to transfer-messenger RNA (tmRNA), required for stable association of tmRNA with ribosomes. tmRNA and SmpB together mimic tRNA shape, replacing the anticodon stem-loop with SmpB. tmRNA is encoded by the ssrA gene; the 2 termini fold to resemble tRNA(Ala) and it encodes a 'tag peptide', a short internal open reading frame. During trans-translation Ala-aminoacylated tmRNA acts like a tRNA, entering the A-site of stalled ribosomes, displacing the stalled mRNA. The ribosome then switches to translate the ORF on the tmRNA; the nascent peptide is terminated with the 'tag peptide' encoded by the tmRNA and targeted for degradation. The ribosome is freed to recommence translation, which seems to be the essential function of trans-translation. This is SsrA-binding protein from Saccharophagus degradans (strain 2-40 / ATCC 43961 / DSM 17024).